Reading from the N-terminus, the 213-residue chain is Adenylate kinase (213 aa).

An ATP-binding site is contributed by 14–19 (GSGKGT). Positions 34-63 (SSGNLLRSAIKASTPLGIKASEYIDEGQLV) are NMP. AMP contacts are provided by residues S35, R40, 61 to 63 (QLV), 89 to 92 (GFPR), and Q96. Residues 129–162 (SRFICPSCNFVYNQSQGFRECPTCHSELVRRSDD) form an LID region. R130 serves as a coordination point for ATP. 2 residues coordinate Zn(2+): C133 and C136. 139 to 140 (VY) provides a ligand contact to ATP. 2 residues coordinate Zn(2+): C149 and C152. Positions 159 and 170 each coordinate AMP. Position 198 (K198) interacts with ATP.

It belongs to the adenylate kinase family. As to quaternary structure, monomer.

It localises to the cytoplasm. It catalyses the reaction AMP + ATP = 2 ADP. It participates in purine metabolism; AMP biosynthesis via salvage pathway; AMP from ADP: step 1/1. Its function is as follows. Catalyzes the reversible transfer of the terminal phosphate group between ATP and AMP. Plays an important role in cellular energy homeostasis and in adenine nucleotide metabolism. The protein is Adenylate kinase of Chlamydia felis (strain Fe/C-56) (Chlamydophila felis).